Reading from the N-terminus, the 67-residue chain is ATP synthase F(0) complex subunit 8 (67 aa).

The helical transmembrane segment at 8 to 24 threads the bilayer; the sequence is TWFITIVSMLLSLFILM. Lys54 carries the post-translational modification N6-acetyllysine; alternate. Residue Lys54 is modified to N6-succinyllysine; alternate. At Lys57 the chain carries N6-acetyllysine.

Belongs to the ATPase protein 8 family. Component of the ATP synthase complex composed at least of ATP5F1A/subunit alpha, ATP5F1B/subunit beta, ATP5MC1/subunit c (homooctomer), MT-ATP6/subunit a, MT-ATP8/subunit 8, ATP5ME/subunit e, ATP5MF/subunit f, ATP5MG/subunit g, ATP5MK/subunit k, ATP5MJ/subunit j, ATP5F1C/subunit gamma, ATP5F1D/subunit delta, ATP5F1E/subunit epsilon, ATP5PF/subunit F6, ATP5PB/subunit b, ATP5PD/subunit d, ATP5PO/subunit OSCP. ATP synthase complex consists of a soluble F(1) head domain (subunits alpha(3) and beta(3)) - the catalytic core - and a membrane F(0) domain - the membrane proton channel (subunits c, a, 8, e, f, g, k and j). These two domains are linked by a central stalk (subunits gamma, delta, and epsilon) rotating inside the F1 region and a stationary peripheral stalk (subunits F6, b, d, and OSCP). Interacts with PRICKLE3.

The protein resides in the mitochondrion membrane. In terms of biological role, subunit 8, of the mitochondrial membrane ATP synthase complex (F(1)F(0) ATP synthase or Complex V) that produces ATP from ADP in the presence of a proton gradient across the membrane which is generated by electron transport complexes of the respiratory chain. ATP synthase complex consist of a soluble F(1) head domain - the catalytic core - and a membrane F(1) domain - the membrane proton channel. These two domains are linked by a central stalk rotating inside the F(1) region and a stationary peripheral stalk. During catalysis, ATP synthesis in the catalytic domain of F(1) is coupled via a rotary mechanism of the central stalk subunits to proton translocation. In vivo, can only synthesize ATP although its ATP hydrolase activity can be activated artificially in vitro. Part of the complex F(0) domain. The protein is ATP synthase F(0) complex subunit 8 of Dasypus novemcinctus (Nine-banded armadillo).